The primary structure comprises 415 residues: Phosphoglycerate kinase (415 aa).

Substrate contacts are provided by residues 24 to 26, arginine 43, 66 to 69, arginine 125, and arginine 165; these read DLN and HLGR. Residues lysine 215, glycine 303, glutamate 334, and 363-366 each bind ATP; that span reads GGDS.

This sequence belongs to the phosphoglycerate kinase family. In terms of assembly, monomer.

It localises to the cytoplasm. It carries out the reaction (2R)-3-phosphoglycerate + ATP = (2R)-3-phospho-glyceroyl phosphate + ADP. The protein operates within carbohydrate degradation; glycolysis; pyruvate from D-glyceraldehyde 3-phosphate: step 2/5. The protein is Phosphoglycerate kinase of Mycobacterium avium (strain 104).